We begin with the raw amino-acid sequence, 401 residues long: 8-amino-7-oxononanoate synthase (401 aa).

R24 lines the substrate pocket. Residue 111–112 (GF) participates in pyridoxal 5'-phosphate binding. H137 contacts substrate. Pyridoxal 5'-phosphate is bound by residues S183, H211, and T240. K243 carries the post-translational modification N6-(pyridoxal phosphate)lysine. Position 357 (T357) interacts with substrate.

It belongs to the class-II pyridoxal-phosphate-dependent aminotransferase family. BioF subfamily. In terms of assembly, homodimer. Pyridoxal 5'-phosphate is required as a cofactor.

It catalyses the reaction 6-carboxyhexanoyl-[ACP] + L-alanine + H(+) = (8S)-8-amino-7-oxononanoate + holo-[ACP] + CO2. Its pathway is cofactor biosynthesis; biotin biosynthesis. Catalyzes the decarboxylative condensation of pimeloyl-[acyl-carrier protein] and L-alanine to produce 8-amino-7-oxononanoate (AON), [acyl-carrier protein], and carbon dioxide. The polypeptide is 8-amino-7-oxononanoate synthase (Xylella fastidiosa (strain M12)).